The sequence spans 82 residues: Sec-independent protein translocase protein TatA (82 aa).

Residues 1 to 21 traverse the membrane as a helical segment; the sequence is MGSFSIWHWLIVLLIVVMVFG. Residues 46-82 form a disordered region; the sequence is GASTDDSATTSAPAGQVTNNSAAADKTTIDVEAKHKS. The span at 49 to 67 shows a compositional bias: polar residues; that stretch reads TDDSATTSAPAGQVTNNSA. Residues 72 to 82 show a composition bias toward basic and acidic residues; the sequence is TTIDVEAKHKS.

This sequence belongs to the TatA/E family. The Tat system comprises two distinct complexes: a TatABC complex, containing multiple copies of TatA, TatB and TatC subunits, and a separate TatA complex, containing only TatA subunits. Substrates initially bind to the TatABC complex, which probably triggers association of the separate TatA complex to form the active translocon.

The protein resides in the cell inner membrane. Functionally, part of the twin-arginine translocation (Tat) system that transports large folded proteins containing a characteristic twin-arginine motif in their signal peptide across membranes. TatA could form the protein-conducting channel of the Tat system. The sequence is that of Sec-independent protein translocase protein TatA from Acidovorax ebreus (strain TPSY) (Diaphorobacter sp. (strain TPSY)).